Consider the following 220-residue polypeptide: Protein-L-isoaspartate O-methyltransferase (220 aa).

Serine 68 is a catalytic residue.

This sequence belongs to the methyltransferase superfamily. L-isoaspartyl/D-aspartyl protein methyltransferase family.

The protein resides in the cytoplasm. It catalyses the reaction [protein]-L-isoaspartate + S-adenosyl-L-methionine = [protein]-L-isoaspartate alpha-methyl ester + S-adenosyl-L-homocysteine. Its function is as follows. Catalyzes the methyl esterification of L-isoaspartyl residues in peptides and proteins that result from spontaneous decomposition of normal L-aspartyl and L-asparaginyl residues. It plays a role in the repair and/or degradation of damaged proteins. This Dictyoglomus thermophilum (strain ATCC 35947 / DSM 3960 / H-6-12) protein is Protein-L-isoaspartate O-methyltransferase.